A 312-amino-acid polypeptide reads, in one-letter code: Olfactory receptor OR51C1 (312 aa).

The Extracellular segment spans residues 1 to 26; it reads MGSNITSTSIIFLLTGVPGLEAFHTW. The helical transmembrane segment at 27 to 47 threads the bilayer; sequence ISIPFCFLSVTALLGNSLILF. At 48–66 the chain is on the cytoplasmic side; it reads ATITQPSLHEPMYYFLSML. A helical membrane pass occupies residues 67 to 87; the sequence is SATDLGLSISTLVTMLSIFWF. The Extracellular segment spans residues 88-99; the sequence is NVREISFNACLS. C97 and C179 form a disulfide bridge. A helical membrane pass occupies residues 100–120; the sequence is HMFFIKFFTVMESSVLLAMAF. The Cytoplasmic segment spans residues 121 to 143; that stretch reads DRFVAVSNPLRYAMILTDSRIAQ. A helical membrane pass occupies residues 144–164; it reads IGVASVIRGLLMLTPMVALLI. The Extracellular portion of the chain corresponds to 165–201; it reads RLSYCHSQVLHHSYCYHPDVMKLSCTDTRINSAVGLT. The helical transmembrane segment at 202–222 threads the bilayer; the sequence is AMFSTVGVDLLLILLSYVLII. The Cytoplasmic portion of the chain corresponds to 223–240; the sequence is RTVLSVASPEERKETFST. The helical transmembrane segment at 241–261 threads the bilayer; the sequence is CVSHIVAFAIYYIPLISLSIV. The Extracellular portion of the chain corresponds to 262–273; the sequence is HRFGKQAPAYVH. The helical transmembrane segment at 274-294 threads the bilayer; it reads TMIANTYLLISPLMNPVIYSV. At 295–312 the chain is on the cytoplasmic side; it reads KTKQIRRAVIKILHSKET.

Belongs to the G-protein coupled receptor 1 family.

The protein resides in the membrane. In terms of biological role, odorant receptor. In Homo sapiens (Human), this protein is Olfactory receptor OR51C1.